Consider the following 389-residue polypeptide: 8-amino-7-oxononanoate synthase (389 aa).

Residue Arg19 participates in substrate binding. Pyridoxal 5'-phosphate is bound at residue 106-107; it reads GY. A substrate-binding site is contributed by His131. Pyridoxal 5'-phosphate is bound by residues Ser178, 203 to 206, and 234 to 237; these read DDAH and TLSK. Residue Lys237 is modified to N6-(pyridoxal phosphate)lysine. Residue Thr351 participates in substrate binding.

It belongs to the class-II pyridoxal-phosphate-dependent aminotransferase family. BioF subfamily. As to quaternary structure, homodimer. Pyridoxal 5'-phosphate is required as a cofactor.

The enzyme catalyses 6-carboxyhexanoyl-[ACP] + L-alanine + H(+) = (8S)-8-amino-7-oxononanoate + holo-[ACP] + CO2. Its pathway is cofactor biosynthesis; biotin biosynthesis. Its function is as follows. Catalyzes the decarboxylative condensation of pimeloyl-[acyl-carrier protein] and L-alanine to produce 8-amino-7-oxononanoate (AON), [acyl-carrier protein], and carbon dioxide. Can also use pimeloyl-CoA instead of pimeloyl-ACP as substrate. The polypeptide is 8-amino-7-oxononanoate synthase (bioF) (Lysinibacillus sphaericus (Bacillus sphaericus)).